The following is a 190-amino-acid chain: NADH-quinone oxidoreductase subunit B (190 aa).

4 residues coordinate [4Fe-4S] cluster: Cys-69, Cys-70, Cys-134, and Cys-164.

Belongs to the complex I 20 kDa subunit family. As to quaternary structure, NDH-1 is composed of 14 different subunits. Subunits NuoB, C, D, E, F, and G constitute the peripheral sector of the complex. [4Fe-4S] cluster serves as cofactor.

It localises to the cell inner membrane. It catalyses the reaction a quinone + NADH + 5 H(+)(in) = a quinol + NAD(+) + 4 H(+)(out). NDH-1 shuttles electrons from NADH, via FMN and iron-sulfur (Fe-S) centers, to quinones in the respiratory chain. Couples the redox reaction to proton translocation (for every two electrons transferred, four hydrogen ions are translocated across the cytoplasmic membrane), and thus conserves the redox energy in a proton gradient. This chain is NADH-quinone oxidoreductase subunit B, found in Chelativorans sp. (strain BNC1).